Here is a 604-residue protein sequence, read N- to C-terminus: Uptake hydrogenase large subunit (604 aa).

Residues Cys-76, Cys-79, Cys-583, and Cys-586 each coordinate Ni(2+).

This sequence belongs to the [NiFe]/[NiFeSe] hydrogenase large subunit family. Heterodimer of a large and a small subunit. Requires Ni(2+) as cofactor.

It localises to the cell membrane. The enzyme catalyses H2 + A = AH2. Its function is as follows. This enzyme recycles the H(2) produced by nitrogenase to increase the production of ATP and to protect nitrogenase against inhibition or damage by O(2) under carbon- or phosphate-limited conditions. This is Uptake hydrogenase large subunit (hoxL) from Afipia carboxidovorans (strain ATCC 49405 / DSM 1227 / KCTC 32145 / OM5) (Oligotropha carboxidovorans).